Consider the following 178-residue polypeptide: Protein GrpE (178 aa).

This sequence belongs to the GrpE family. In terms of assembly, homodimer.

The protein localises to the cytoplasm. In terms of biological role, participates actively in the response to hyperosmotic and heat shock by preventing the aggregation of stress-denatured proteins, in association with DnaK and GrpE. It is the nucleotide exchange factor for DnaK and may function as a thermosensor. Unfolded proteins bind initially to DnaJ; upon interaction with the DnaJ-bound protein, DnaK hydrolyzes its bound ATP, resulting in the formation of a stable complex. GrpE releases ADP from DnaK; ATP binding to DnaK triggers the release of the substrate protein, thus completing the reaction cycle. Several rounds of ATP-dependent interactions between DnaJ, DnaK and GrpE are required for fully efficient folding. The sequence is that of Protein GrpE from Bordetella avium (strain 197N).